Here is a 237-residue protein sequence, read N- to C-terminus: Uridylate kinase (237 aa).

ATP is bound at residue 11–14 (KLSG). Gly53 provides a ligand contact to UMP. 2 residues coordinate ATP: Gly54 and Arg58. UMP is bound by residues Asp73 and 134 to 141 (TGNPFFTT). Residues Thr161, Tyr167, and Asp170 each coordinate ATP.

This sequence belongs to the UMP kinase family. Homohexamer.

The protein resides in the cytoplasm. It carries out the reaction UMP + ATP = UDP + ADP. It participates in pyrimidine metabolism; CTP biosynthesis via de novo pathway; UDP from UMP (UMPK route): step 1/1. Inhibited by UTP. Functionally, catalyzes the reversible phosphorylation of UMP to UDP. The sequence is that of Uridylate kinase from Paraburkholderia xenovorans (strain LB400).